Reading from the N-terminus, the 265-residue chain is Nitrogenase vanadium-iron protein alpha chain (265 aa).

[8Fe-7S] cluster is bound by residues Cys-17 and Cys-80. Cys-199 contributes to the [7Fe-V-9S-C-homocitryl] cluster binding site.

Belongs to the NifD/NifK/NifE/NifN family. As to quaternary structure, hexamer of two alpha, two beta, and two delta chains. [8Fe-7S] cluster serves as cofactor. [7Fe-V-9S-C-homocitryl] cluster is required as a cofactor.

It catalyses the reaction N2 + 8 reduced [2Fe-2S]-[ferredoxin] + 16 ATP + 16 H2O = H2 + 8 oxidized [2Fe-2S]-[ferredoxin] + 2 NH4(+) + 16 ADP + 16 phosphate + 6 H(+). This vanadium-iron protein is part of the nitrogenase complex that catalyzes the key enzymatic reactions in nitrogen fixation. This is Nitrogenase vanadium-iron protein alpha chain (vnfD) from Azorhizophilus paspali (Azotobacter paspali).